The chain runs to 323 residues: Acetyl-coenzyme A carboxylase carboxyl transferase subunit alpha 1 (323 aa).

Positions 39-293 (RLSKKSQQLT…RRALGDSLRQ (255 aa)) constitute a CoA carboxyltransferase C-terminal domain.

This sequence belongs to the AccA family. Acetyl-CoA carboxylase is a heterohexamer composed of biotin carboxyl carrier protein (AccB), biotin carboxylase (AccC) and two subunits each of ACCase subunit alpha (AccA) and ACCase subunit beta (AccD).

It is found in the cytoplasm. It carries out the reaction N(6)-carboxybiotinyl-L-lysyl-[protein] + acetyl-CoA = N(6)-biotinyl-L-lysyl-[protein] + malonyl-CoA. It participates in lipid metabolism; malonyl-CoA biosynthesis; malonyl-CoA from acetyl-CoA: step 1/1. Functionally, component of the acetyl coenzyme A carboxylase (ACC) complex. First, biotin carboxylase catalyzes the carboxylation of biotin on its carrier protein (BCCP) and then the CO(2) group is transferred by the carboxyltransferase to acetyl-CoA to form malonyl-CoA. Its function is as follows. Does not confer resistance to the endogenous polyketide antibiotic thailandamide, does not confer resistance to thailandamide when expressed in S.typhimurium. This chain is Acetyl-coenzyme A carboxylase carboxyl transferase subunit alpha 1, found in Burkholderia thailandensis (strain ATCC 700388 / DSM 13276 / CCUG 48851 / CIP 106301 / E264).